The sequence spans 93 residues: Large ribosomal subunit protein bL27 (93 aa).

Residues 1–10 (MRFLLGLQYF) constitute a propeptide that is removed on maturation. The disordered stretch occupies residues 14-36 (KGVGSTKNGRDSESKRLGAKKSD). The span at 21–36 (NGRDSESKRLGAKKSD) shows a compositional bias: basic and acidic residues.

Belongs to the bacterial ribosomal protein bL27 family. Post-translationally, the N-terminus is cleaved by ribosomal processing cysteine protease Prp.

In Mycoplasma capricolum subsp. capricolum (strain California kid / ATCC 27343 / NCTC 10154), this protein is Large ribosomal subunit protein bL27.